Consider the following 492-residue polypeptide: Probable cobyric acid synthase (492 aa).

Residues 252–444 form the GATase cobBQ-type domain; it reads PIEVNIVKFS…FHGILENFEF (193 aa). Residue Cys-330 is the Nucleophile of the active site. The active site involves His-436.

This sequence belongs to the CobB/CobQ family. CobQ subfamily.

Its pathway is cofactor biosynthesis; adenosylcobalamin biosynthesis. In terms of biological role, catalyzes amidations at positions B, D, E, and G on adenosylcobyrinic A,C-diamide. NH(2) groups are provided by glutamine, and one molecule of ATP is hydrogenolyzed for each amidation. This Methanococcus maripaludis (strain C6 / ATCC BAA-1332) protein is Probable cobyric acid synthase.